Here is a 247-residue protein sequence, read N- to C-terminus: Cell division protein ZapD (247 aa).

This sequence belongs to the ZapD family. Interacts with FtsZ.

Its subcellular location is the cytoplasm. Functionally, cell division factor that enhances FtsZ-ring assembly. Directly interacts with FtsZ and promotes bundling of FtsZ protofilaments, with a reduction in FtsZ GTPase activity. The polypeptide is Cell division protein ZapD (Shigella boydii serotype 4 (strain Sb227)).